We begin with the raw amino-acid sequence, 274 residues long: Large ribosomal subunit protein uL2 (274 aa).

The disordered stretch occupies residues 200 to 274 (HALEKSGKAG…SKYIIERRKK (75 aa)). Composition is skewed to basic residues over residues 207–220 (KAGR…RPRN) and 255–274 (LKTR…RRKK).

Belongs to the universal ribosomal protein uL2 family. In terms of assembly, part of the 50S ribosomal subunit. Forms a bridge to the 30S subunit in the 70S ribosome.

Functionally, one of the primary rRNA binding proteins. Required for association of the 30S and 50S subunits to form the 70S ribosome, for tRNA binding and peptide bond formation. It has been suggested to have peptidyltransferase activity; this is somewhat controversial. Makes several contacts with the 16S rRNA in the 70S ribosome. This chain is Large ribosomal subunit protein uL2, found in Parabacteroides distasonis (strain ATCC 8503 / DSM 20701 / CIP 104284 / JCM 5825 / NCTC 11152).